Consider the following 234-residue polypeptide: Toxic shock syndrome toxin-1 (234 aa).

An N-terminal signal peptide occupies residues 1-40 (MNKKLLMNFFIVSPLLLATTATDFTPVPLSSNQIIKTAKA).

The protein belongs to the staphylococcal/streptococcal toxin family.

The protein localises to the secreted. Its function is as follows. Responsible for the symptoms of toxic shock syndrome. The sequence is that of Toxic shock syndrome toxin-1 (tst) from Staphylococcus aureus.